Consider the following 1583-residue polypeptide: Pentafunctional AROM polypeptide (1583 aa).

The segment at 1 to 384 is 3-dehydroquinate synthase; sequence MSNPTKISIL…YETRASVVAN (384 aa). NAD(+) contacts are provided by residues 44 to 46, 81 to 84, 114 to 116, and Asp-119; these read DTN, EVSK, and GGV. Arg-130 provides a ligand contact to 7-phospho-2-dehydro-3-deoxy-D-arabino-heptonate. Position 139-140 (139-140) interacts with NAD(+); it reads TT. 7-phospho-2-dehydro-3-deoxy-D-arabino-heptonate-binding residues include Asp-146 and Lys-152. Lys-161 serves as a coordination point for NAD(+). Asn-162 contacts 7-phospho-2-dehydro-3-deoxy-D-arabino-heptonate. NAD(+) contacts are provided by residues 179 to 182 and Asn-190; that span reads FLET. A Zn(2+)-binding site is contributed by Glu-194. 7-phospho-2-dehydro-3-deoxy-D-arabino-heptonate is bound by residues 194–197 and Lys-250; that span reads EVIK. Residue Glu-260 is the Proton acceptor; for 3-dehydroquinate synthase activity of the active site. 7-phospho-2-dehydro-3-deoxy-D-arabino-heptonate is bound by residues 264 to 268 and His-271; that span reads RNLLN. Residue His-271 coordinates Zn(2+). His-275 acts as the Proton acceptor; for 3-dehydroquinate synthase activity in catalysis. Positions 287 and 356 each coordinate 7-phospho-2-dehydro-3-deoxy-D-arabino-heptonate. His-287 contributes to the Zn(2+) binding site. Residues 397-842 form an EPSP synthase region; the sequence is VHPGVAQSSN…WDTLRQLFKV (446 aa). The active-site For EPSP synthase activity is Cys-824. Residues 863-1055 form a shikimate kinase region; sequence NASIYIIGMR…KEKEHSFFAS (193 aa). 870 to 877 contributes to the ATP binding site; sequence GMRGAGKS. Residues 1056–1276 are 3-dehydroquinase; sequence LTLPDLREAG…AAPGQLSATE (221 aa). Catalysis depends on His-1179, which acts as the Proton acceptor; for 3-dehydroquinate dehydratase activity. Lys-1207 acts as the Schiff-base intermediate with substrate; for 3-dehydroquinate dehydratase activity in catalysis. The interval 1289-1583 is shikimate dehydrogenase; it reads PKKFAIFGSP…SARACSSPLI (295 aa).

The protein in the N-terminal section; belongs to the sugar phosphate cyclases superfamily. Dehydroquinate synthase family. In the 2nd section; belongs to the EPSP synthase family. It in the 3rd section; belongs to the shikimate kinase family. This sequence in the 4th section; belongs to the type-I 3-dehydroquinase family. The protein in the C-terminal section; belongs to the shikimate dehydrogenase family. In terms of assembly, homodimer. Zn(2+) serves as cofactor.

The protein localises to the cytoplasm. The enzyme catalyses 7-phospho-2-dehydro-3-deoxy-D-arabino-heptonate = 3-dehydroquinate + phosphate. The catalysed reaction is 3-dehydroquinate = 3-dehydroshikimate + H2O. It carries out the reaction shikimate + NADP(+) = 3-dehydroshikimate + NADPH + H(+). It catalyses the reaction shikimate + ATP = 3-phosphoshikimate + ADP + H(+). The enzyme catalyses 3-phosphoshikimate + phosphoenolpyruvate = 5-O-(1-carboxyvinyl)-3-phosphoshikimate + phosphate. It participates in metabolic intermediate biosynthesis; chorismate biosynthesis; chorismate from D-erythrose 4-phosphate and phosphoenolpyruvate: step 2/7. Its pathway is metabolic intermediate biosynthesis; chorismate biosynthesis; chorismate from D-erythrose 4-phosphate and phosphoenolpyruvate: step 3/7. The protein operates within metabolic intermediate biosynthesis; chorismate biosynthesis; chorismate from D-erythrose 4-phosphate and phosphoenolpyruvate: step 4/7. It functions in the pathway metabolic intermediate biosynthesis; chorismate biosynthesis; chorismate from D-erythrose 4-phosphate and phosphoenolpyruvate: step 5/7. It participates in metabolic intermediate biosynthesis; chorismate biosynthesis; chorismate from D-erythrose 4-phosphate and phosphoenolpyruvate: step 6/7. Functionally, the AROM polypeptide catalyzes 5 consecutive enzymatic reactions in prechorismate polyaromatic amino acid biosynthesis. The polypeptide is Pentafunctional AROM polypeptide (aromA) (Emericella nidulans (strain FGSC A4 / ATCC 38163 / CBS 112.46 / NRRL 194 / M139) (Aspergillus nidulans)).